Reading from the N-terminus, the 517-residue chain is Pentatricopeptide repeat-containing protein At1g13040, mitochondrial (517 aa).

The N-terminal 57 residues, 1–57 (MHQTLGAVRLAYRSRIANLVKSGMIDNAVQVFDEMRHSSYRVFSFDYNRFIGVLVRE), are a transit peptide targeting the mitochondrion. PPR repeat units follow at residues 8-42 (VRLAYRSRIANLVKSGMIDNAVQVFDEMRHSSYRV), 43-77 (FSFDYNRFIGVLVRESRFELAEAIYWDMKPMGFSL), 78-112 (IPFTYSRFISGLCKVKKFDLIDALLSDMETLGFIP), 113-147 (DIWAFNVYLDLLCRENKVGFAVQTFFCMVQRGREP), 148-182 (DVVSYTILINGLFRAGKVTDAVEIWNAMIRSGVSP), 183-218 (DNKACAALVVGLCHARKVDLAYEMVAEEIKSARVKL), 219-253 (STVVYNALISGFCKAGRIEKAEALKSYMSKIGCEP), 254-288 (DLVTYNVLLNYYYDNNMLKRAEGVMAEMVRSGIQL), 289-320 (DAYSYNQLLKRHCRVSHPDKCYNFMVKEMEPR), 324-358 (DVVSYSTLIETFCRASNTRKAYRLFEEMRQKGMVM), 359-393 (NVVTYTSLIKAFLREGNSSVAKKLLDQMTELGLSP), 394-428 (DRIFYTTILDHLCKSGNVDKAYGVFNDMIEHEITP), 429-463 (DAISYNSLISGLCRSGRVTEAIKLFEDMKGKECCP), and 464-498 (DELTFKFIIGGLIRGKKLSAAYKVWDQMMDKGFTL).

Belongs to the PPR family. P subfamily.

The protein resides in the mitochondrion. This is Pentatricopeptide repeat-containing protein At1g13040, mitochondrial from Arabidopsis thaliana (Mouse-ear cress).